We begin with the raw amino-acid sequence, 205 residues long: Phosphoenolpyruvate guanylyltransferase (205 aa).

Positions 138, 154, and 157 each coordinate phosphoenolpyruvate.

The protein belongs to the CofC family.

It carries out the reaction phosphoenolpyruvate + GTP + H(+) = enolpyruvoyl-2-diphospho-5'-guanosine + diphosphate. The protein operates within cofactor biosynthesis; coenzyme F420 biosynthesis. Its function is as follows. Guanylyltransferase that catalyzes the activation of phosphoenolpyruvate (PEP) as enolpyruvoyl-2-diphospho-5'-guanosine, via the condensation of PEP with GTP. It is involved in the biosynthesis of coenzyme F420, a hydride carrier cofactor. This chain is Phosphoenolpyruvate guanylyltransferase, found in Chloroflexus aurantiacus (strain ATCC 29364 / DSM 637 / Y-400-fl).